We begin with the raw amino-acid sequence, 167 residues long: Small ribosomal subunit protein uS5 (167 aa).

The region spanning 12–75 (LQEKLIAVNR…EKARRNMVTV (64 aa)) is the S5 DRBM domain.

This sequence belongs to the universal ribosomal protein uS5 family. Part of the 30S ribosomal subunit. Contacts proteins S4 and S8.

Functionally, with S4 and S12 plays an important role in translational accuracy. In terms of biological role, located at the back of the 30S subunit body where it stabilizes the conformation of the head with respect to the body. The chain is Small ribosomal subunit protein uS5 from Shewanella sp. (strain W3-18-1).